The sequence spans 324 residues: G patch domain-containing protein 4 (324 aa).

2 disordered regions span residues 1–30 (MSASSVKKSQGMKFAEEQMHKHGWKEGKGL) and 123–324 (LSGG…NKSE). One can recognise a G-patch domain in the interval 11–57 (GMKFAEEQMHKHGWKEGKGLGRRENGICEAIKVKVKCDHAGVGHNSA). Basic and acidic residues predominate over residues 14–30 (FAEEQMHKHGWKEGKGL). Residues 131-141 (KEPSSSESSDS) show a composition bias toward low complexity. A compositionally biased stretch (basic and acidic residues) spans 186-215 (SRLEEQEREFLAKYGKKEQKNKERDEKLER). Residues 244-253 (HKKKKKKRKR) are compositionally biased toward basic residues. The segment covering 254-270 (ADSERKEESQENGHEEE) has biased composition (basic and acidic residues). The segment covering 296-309 (PSTQEEQPTESSDF) has biased composition (polar residues). The span at 312–324 (KPKKKKKKKNKSE) shows a compositional bias: basic residues.

In Xenopus laevis (African clawed frog), this protein is G patch domain-containing protein 4 (gpatch4).